A 966-amino-acid chain; its full sequence is Aminopeptidase N (966 aa).

Topologically, residues 1–8 are cytoplasmic; the sequence is MAKGFYIS. A helical; Signal-anchor for type II membrane protein transmembrane segment spans residues 9–32; sequence KSLGILGILLGVAALCTIVALSVV. Positions 33–65 are cytosolic Ser/Thr-rich junction; the sequence is YRQEKNKNTSQSPSMAPLNPTATSSPATTLDQN. Residues 33–966 are Extracellular-facing; the sequence is YRQEKNKNTS…VLAWFTANSA (934 aa). N-linked (GlcNAc...) asparagine glycosylation is found at Asn40 and Asn125. The segment at 40–61 is disordered; the sequence is NTSQSPSMAPLNPTATSSPATT. A metalloprotease region spans residues 66-966; it reads LPWNRYRLPK…VLAWFTANSA (901 aa). Tyr173 carries the post-translational modification Sulfotyrosine. 2 N-linked (GlcNAc...) asparagine glycosylation sites follow: Asn259 and Asn315. 348 to 352 contacts substrate; sequence GAMEN. His384 provides a ligand contact to Zn(2+). The Proton acceptor role is filled by Glu385. Positions 388 and 407 each coordinate Zn(2+). Tyr415 and Tyr420 each carry sulfotyrosine. N-linked (GlcNAc...) asparagine glycans are attached at residues Asn552, Asn570, Asn624, and Asn734. Cystine bridges form between Cys760–Cys767 and Cys797–Cys833. N-linked (GlcNAc...) asparagine glycosylation occurs at Asn817. Tyr852 carries the phosphotyrosine modification. Tyr912 carries the post-translational modification Sulfotyrosine.

Belongs to the peptidase M1 family. In terms of assembly, homodimer. Interacts with SLC6A19. It depends on Zn(2+) as a cofactor. Post-translationally, sulfated. In terms of processing, N- and O-glycosylated. May undergo proteolysis and give rise to a soluble form.

Its subcellular location is the cell membrane. The enzyme catalyses Release of an N-terminal amino acid, Xaa-|-Yaa- from a peptide, amide or arylamide. Xaa is preferably Ala, but may be most amino acids including Pro (slow action). When a terminal hydrophobic residue is followed by a prolyl residue, the two may be released as an intact Xaa-Pro dipeptide.. Broad specificity aminopeptidase which plays a role in the final digestion of peptides generated from hydrolysis of proteins by gastric and pancreatic proteases. Also involved in the processing of various peptides including peptide hormones, such as angiotensin III and IV, neuropeptides, and chemokines. May also be involved the cleavage of peptides bound to major histocompatibility complex class II molecules of antigen presenting cells. May have a role in angiogenesis and promote cholesterol crystallization. May have a role in amino acid transport by acting as binding partner of amino acid transporter SLC6A19 and regulating its activity. The chain is Aminopeptidase N (ANPEP) from Oryctolagus cuniculus (Rabbit).